The sequence spans 240 residues: Small ribosomal subunit protein uS3 (240 aa).

Positions 39 to 108 (LRKFLKKKLY…ELILNIKEER (70 aa)) constitute a KH type-2 domain. Residues 213 to 224 (MNSDDTATPERK) are compositionally biased toward basic and acidic residues. Residues 213-240 (MNSDDTATPERKAPRRRKGRRNVNAKKN) form a disordered region. A compositionally biased stretch (basic residues) spans 225–240 (APRRRKGRRNVNAKKN).

This sequence belongs to the universal ribosomal protein uS3 family. As to quaternary structure, part of the 30S ribosomal subunit. Forms a tight complex with proteins S10 and S14.

Binds the lower part of the 30S subunit head. Binds mRNA in the 70S ribosome, positioning it for translation. The sequence is that of Small ribosomal subunit protein uS3 from Nautilia profundicola (strain ATCC BAA-1463 / DSM 18972 / AmH).